The following is a 65-amino-acid chain: Large ribosomal subunit protein bL35 (65 aa).

A disordered region spans residues 1-22 (MPKIKTVRGAAKRFKKTGKGGF). Basic residues predominate over residues 10 to 22 (AAKRFKKTGKGGF).

The protein belongs to the bacterial ribosomal protein bL35 family.

This chain is Large ribosomal subunit protein bL35, found in Escherichia coli O127:H6 (strain E2348/69 / EPEC).